The chain runs to 310 residues: ADP-L-glycero-D-manno-heptose-6-epimerase (310 aa).

NADP(+) is bound by residues 10–11, 31–32, Lys38, Lys53, 75–79, and Asn92; these read FI, DN, and EGACS. Tyr140 functions as the Proton acceptor in the catalytic mechanism. Lys144 provides a ligand contact to NADP(+). Asn169 serves as a coordination point for substrate. NADP(+)-binding residues include Val170 and Lys178. Lys178 functions as the Proton acceptor in the catalytic mechanism. Residues Ser180, His187, 201-204, and Arg209 contribute to the substrate site; that span reads FEGS. The residue at position 267 (Lys267) is an N6-acetyllysine. Tyr272 contributes to the substrate binding site.

It belongs to the NAD(P)-dependent epimerase/dehydratase family. HldD subfamily. As to quaternary structure, homopentamer. The cofactor is NADP(+).

The enzyme catalyses ADP-D-glycero-beta-D-manno-heptose = ADP-L-glycero-beta-D-manno-heptose. The protein operates within nucleotide-sugar biosynthesis; ADP-L-glycero-beta-D-manno-heptose biosynthesis; ADP-L-glycero-beta-D-manno-heptose from D-glycero-beta-D-manno-heptose 7-phosphate: step 4/4. Its function is as follows. Catalyzes the interconversion between ADP-D-glycero-beta-D-manno-heptose and ADP-L-glycero-beta-D-manno-heptose via an epimerization at carbon 6 of the heptose. The chain is ADP-L-glycero-D-manno-heptose-6-epimerase from Escherichia coli (strain SMS-3-5 / SECEC).